A 649-amino-acid polypeptide reads, in one-letter code: Leucine-rich repeat transmembrane protein FLRT3 (649 aa).

An N-terminal signal peptide occupies residues 1–28; sequence MISPAWSIFLIGTKIGLFLQVAPLSVMA. Positions 29-58 constitute an LRRNT domain; the sequence is KSCPSVCRCDAGFIYCNDRFLTSIPTGIPE. At 29–528 the chain is on the extracellular side; it reads KSCPSVCRCD…KEPYKNPNLP (500 aa). 2 disulfides stabilise this stretch: Cys31/Cys37 and Cys35/Cys44. An interaction with ADGRL3 region spans residues 38–67; it reads DAGFIYCNDRFLTSIPTGIPEDATTLYLQN. LRR repeat units follow at residues 59–80, 84–104, 105–126, 129–150, 155–176, 177–197, 200–220, 226–247, 248–269, and 272–293; these read DATT…SDLK, KVER…NLPK, YVKE…SLSK, YLEE…EGAF, YLRL…LPRT, IEEL…SLQG, SLKR…GDKV, NLTE…LPGT, NLRK…AFSY, and QLYR…IFDD. An N-linked (GlcNAc...) asparagine glycan is attached at Asn226. Asn282 and Asn296 each carry an N-linked (GlcNAc...) asparagine glycan. Positions 305 to 357 constitute an LRRCT domain; the sequence is NPWYCGCKMKWVRDWLQSLPVKVNVRGLMCQAPEKVRGMAIKDLNAELFDCKD. Cys309 and Cys334 are joined by a disulfide. The tract at residues 385–407 is disordered; it reads VTKQPDIKNPKLTKDHQTTGSPS. A compositionally biased stretch (basic and acidic residues) spans 389–401; the sequence is PDIKNPKLTKDHQ. Residues 409–504 form the Fibronectin type-III domain; the sequence is KTITITVKSV…VCIETETAPL (96 aa). A helical membrane pass occupies residues 529–549; the sequence is LAAIIGGAVALVTIALLALVC. Topologically, residues 550-649 are cytoplasmic; sequence WYVHRNGSLF…GIPDSDHSHS (100 aa). The disordered stretch occupies residues 622–649; sequence LYKNNHSESSSNRSYRDSGIPDSDHSHS.

As to quaternary structure, monomer and homodimer. Self-associates (via leucine-rich repeats), giving rise to homooligomers. Interacts with FGFR1. Interacts (via extracellular domain) with ADGRL1/LPHN1 and LPHN2 (via olfactomedin-like domain). Interacts (via extracellular domain) with ADGRL3 (via olfactomedin-like domain); the interaction is direct. Interacts (via extracellular domain) with UNC5B and UNC5D (via extracellular domain); the interaction is direct. Identified in complexes composed of FLRT3, ADGRL3 and UNC5B, respectively FLRT3, ADGRL3 and UNC5D. May also interact (via extracellular domain) with UNC5A and UNC5C. Interacts (via cytoplasmic domain) with ROBO1. N-glycosylated. Post-translationally, proteolytic cleavage in the juxtamembrane region gives rise to a soluble ectodomain. Cleavage is probably effected by a metalloprotease.

It is found in the cell membrane. The protein localises to the presynaptic cell membrane. Its subcellular location is the endoplasmic reticulum membrane. It localises to the cell junction. The protein resides in the focal adhesion. It is found in the secreted. The protein localises to the cell projection. Its subcellular location is the axon. It localises to the growth cone membrane. In terms of biological role, functions in cell-cell adhesion, cell migration and axon guidance, exerting an attractive or repulsive role depending on its interaction partners. Plays a role in the spatial organization of brain neurons. Plays a role in vascular development in the retina. Plays a role in cell-cell adhesion via its interaction with ADGRL3 and probably also other latrophilins that are expressed at the surface of adjacent cells. Interaction with the intracellular domain of ROBO1 mediates axon attraction towards cells expressing NTN1. Mediates axon growth cone collapse and plays a repulsive role in neuron guidance via its interaction with UNC5B, and possibly also other UNC-5 family members. Promotes neurite outgrowth (in vitro). Mediates cell-cell contacts that promote an increase both in neurite number and in neurite length. Plays a role in the regulation of the density of glutamaergic synapses. Plays a role in fibroblast growth factor-mediated signaling cascades. Required for normal morphogenesis during embryonic development, but not for normal embryonic patterning. Required for normal ventral closure, headfold fusion and definitive endoderm migration during embryonic development. Required for the formation of a normal basement membrane and the maintenance of a normal anterior visceral endoderm during embryonic development. The chain is Leucine-rich repeat transmembrane protein FLRT3 (FLRT3) from Pongo abelii (Sumatran orangutan).